The primary structure comprises 450 residues: L-galactonate dehydratase (450 aa).

Lys-221 is a catalytic residue. Residues Asp-251, Glu-277, and Glu-306 each coordinate Mg(2+). The active site involves His-356.

This sequence belongs to the mandelate racemase/muconate lactonizing enzyme family. Mg(2+) is required as a cofactor.

It carries out the reaction L-galactonate = 2-dehydro-3-deoxy-L-galactonate + H2O. It participates in carbohydrate acid metabolism. Mediates the conversion of L-galactonate to 2-dehydro-3-deoxy-L-galactonate, the second step in D-galacturonate catabolic process. The polypeptide is L-galactonate dehydratase (lgd1) (Hypocrea jecorina (Trichoderma reesei)).